Reading from the N-terminus, the 201-residue chain is Recombination protein RecR (201 aa).

A C4-type zinc finger spans residues 57–72 (CRYCRNLSDAEVCLLC). Residues 80 to 175 (QQICVVETPA…QATRLAYGVP (96 aa)) enclose the Toprim domain.

Belongs to the RecR family.

In terms of biological role, may play a role in DNA repair. It seems to be involved in an RecBC-independent recombinational process of DNA repair. It may act with RecF and RecO. This is Recombination protein RecR from Dichelobacter nodosus (strain VCS1703A).